We begin with the raw amino-acid sequence, 235 residues long: Adenosine 5'-phosphosulfate reductase (235 aa).

Residues Cys-121, Cys-122, Cys-204, and Cys-207 each contribute to the [4Fe-4S] cluster site. Catalysis depends on Cys-230, which acts as the Nucleophile; cysteine thiosulfonate intermediate.

The protein belongs to the PAPS reductase family. CysH subfamily. The cofactor is [4Fe-4S] cluster.

It localises to the cytoplasm. It catalyses the reaction [thioredoxin]-disulfide + sulfite + AMP + 2 H(+) = adenosine 5'-phosphosulfate + [thioredoxin]-dithiol. The protein operates within sulfur metabolism; hydrogen sulfide biosynthesis; sulfite from sulfate. Catalyzes the formation of sulfite from adenosine 5'-phosphosulfate (APS) using thioredoxin as an electron donor. This chain is Adenosine 5'-phosphosulfate reductase, found in Geobacillus sp. (strain WCH70).